We begin with the raw amino-acid sequence, 351 residues long: Trace amine-associated receptor 2 (351 aa).

Topologically, residues 1–48 are extracellular; the sequence is MAVSSEQHELSHFKRTQTKKEKFNCSEYGNRSCPENERSLGVRVAMYS. 2 N-linked (GlcNAc...) asparagine glycosylation sites follow: Asn24 and Asn30. 2 disulfide bridges follow: Cys33-Cys197 and Cys116-Cys201. The helical transmembrane segment at 49-69 threads the bilayer; the sequence is FMAGSIFITIFGNLAMIISIS. Residues 70-79 are Cytoplasmic-facing; that stretch reads YFKQLHTPTN. A helical membrane pass occupies residues 80–100; it reads FLILSMAITDFLLGFTIMPYS. Over 101–118 the chain is Extracellular; that stretch reads MIRSVENCWYFGLTFCKI. The chain crosses the membrane as a helical span at residues 119–139; sequence YYSFDLMLSITSIFHLCSVAI. Residues 140-162 are Cytoplasmic-facing; it reads DRFYAICYPLLYSTKITIPVIKR. The chain crosses the membrane as a helical span at residues 163–183; the sequence is LLLLCWSVPGAFAFGVVFSEA. Topologically, residues 184 to 207 are extracellular; that stretch reads YADGIEGYDILVACSSSCPVMFNK. Residues 208–228 form a helical membrane-spanning segment; the sequence is LWGTTLFMAGFFTPGSMMVGI. Over 229-263 the chain is Cytoplasmic; sequence YGKIFAVSRKHAHAINNLRENQNNQVKKDKKAAKT. Residues 264 to 284 traverse the membrane as a helical segment; sequence LGIVIGVFLLCWFPCFFTILL. At 285-299 the chain is on the extracellular side; sequence DPFLNFSTPVVLFDA. N-linked (GlcNAc...) asparagine glycosylation occurs at Asn289. Residues 300 to 322 traverse the membrane as a helical segment; sequence LTWFGYFNSTCNPLIYGFFYPWF. Topologically, residues 323 to 351 are cytoplasmic; the sequence is RRALKYILLGKIFSSCFHNTILCMQKESE.

This sequence belongs to the G-protein coupled receptor 1 family. In terms of tissue distribution, not expressed in the pons, thalamus, hypothalamus, hippocampus, caudate, putamen, frontal cortex, basal forebrain, midbrain or liver.

It localises to the cell membrane. In terms of biological role, orphan olfactory receptor specific for trace amines. Trace amine compounds are enriched in animal body fluids and act on trace amine-associated receptors (TAARs) to elicit both intraspecific and interspecific innate behaviors. Ligand-binding causes a conformation change that triggers signaling via the G(s)-class of G-proteins which activate adenylate cyclase. This is Trace amine-associated receptor 2 from Homo sapiens (Human).